The following is a 312-amino-acid chain: 4-diphosphocytidyl-2-C-methyl-D-erythritol kinase (312 aa).

The active site involves lysine 18. Residue 104 to 114 (PIAGGMGGGSA) participates in ATP binding. The active site involves aspartate 146.

Belongs to the GHMP kinase family. IspE subfamily.

The catalysed reaction is 4-CDP-2-C-methyl-D-erythritol + ATP = 4-CDP-2-C-methyl-D-erythritol 2-phosphate + ADP + H(+). It participates in isoprenoid biosynthesis; isopentenyl diphosphate biosynthesis via DXP pathway; isopentenyl diphosphate from 1-deoxy-D-xylulose 5-phosphate: step 3/6. In terms of biological role, catalyzes the phosphorylation of the position 2 hydroxy group of 4-diphosphocytidyl-2C-methyl-D-erythritol. The protein is 4-diphosphocytidyl-2-C-methyl-D-erythritol kinase of Clavibacter michiganensis subsp. michiganensis (strain NCPPB 382).